The chain runs to 369 residues: Cobalt-precorrin-5B C(1)-methyltransferase (369 aa).

The protein belongs to the CbiD family.

The enzyme catalyses Co-precorrin-5B + S-adenosyl-L-methionine = Co-precorrin-6A + S-adenosyl-L-homocysteine. Its pathway is cofactor biosynthesis; adenosylcobalamin biosynthesis; cob(II)yrinate a,c-diamide from sirohydrochlorin (anaerobic route): step 6/10. Catalyzes the methylation of C-1 in cobalt-precorrin-5B to form cobalt-precorrin-6A. This chain is Cobalt-precorrin-5B C(1)-methyltransferase, found in Brucella melitensis biotype 2 (strain ATCC 23457).